We begin with the raw amino-acid sequence, 72 residues long: Translation initiation factor IF-1 (72 aa).

Residues 1–72 form the S1-like domain; that stretch reads MSKEDHIEME…SKARITFRHR (72 aa).

The protein belongs to the IF-1 family. Component of the 30S ribosomal translation pre-initiation complex which assembles on the 30S ribosome in the order IF-2 and IF-3, IF-1 and N-formylmethionyl-tRNA(fMet); mRNA recruitment can occur at any time during PIC assembly.

It is found in the cytoplasm. One of the essential components for the initiation of protein synthesis. Stabilizes the binding of IF-2 and IF-3 on the 30S subunit to which N-formylmethionyl-tRNA(fMet) subsequently binds. Helps modulate mRNA selection, yielding the 30S pre-initiation complex (PIC). Upon addition of the 50S ribosomal subunit IF-1, IF-2 and IF-3 are released leaving the mature 70S translation initiation complex. This is Translation initiation factor IF-1 from Methylococcus capsulatus (strain ATCC 33009 / NCIMB 11132 / Bath).